Consider the following 558-residue polypeptide: MNFKSDIQIAQECSMENIKDIAKKLNIFEDEIELYGKYKAKIDYNLLKTTKGKNGKLILCTAINPTPAGEGKTTTSIGVADALARLDKSVVVALREPSMGPVFGIKGGAAGGGYAQVVPMEDINLHFTGDIHAMTAANNLLAALIDNHIYQGNKLNIDSRRVVWRRCVDMNDRQLRFVVDGLGGKVNGIPREDGFDITVASEIMAIFCLSTDINDLKERISKIVVGYTTEGNPVTAHDLKAEGAMAALLKDALKPNLVQTLEGTPAFVHGGPFANIAHGCNSIMATRMAMHFGDYVVTEAGFGADLGAEKFLDIKCRMAGLRPDAVIIVATVRALKYNGGTPKTKLNNENLETLEKGIPNLLKHVENITKVFKLPAVVALNAFPTDTEAELKLVEEKCREFGVSVKLSEVWAKGGEGGIEVAKEVLRLINEGKNDFQFAYDEKLPIRDKIRAIAQKIYGADGVTFTNQAEKEIDELEKLGFGKTPVCIAKTQYSLTDDQNKLGRPKGFKITVRQVSISAGAGFVVAITGSIMKMPGLPKVPAAEKIDVDENGVISGLF.

66–73 lines the ATP pocket; that stretch reads TPAGEGKT.

This sequence belongs to the formate--tetrahydrofolate ligase family.

The catalysed reaction is (6S)-5,6,7,8-tetrahydrofolate + formate + ATP = (6R)-10-formyltetrahydrofolate + ADP + phosphate. It functions in the pathway one-carbon metabolism; tetrahydrofolate interconversion. The chain is Formate--tetrahydrofolate ligase from Clostridium kluyveri (strain NBRC 12016).